A 1238-amino-acid chain; its full sequence is Chitin synthase 4 (1238 aa).

Disordered regions lie at residues 1-93 and 132-190; these read MAEP…PERN and TVSS…RRQK. Positions 14–34 are enriched in basic and acidic residues; it reads TRDKSHSPYRESPSRRLRDVE. Residue Asn50 is glycosylated (N-linked (GlcNAc...) asparagine). 2 stretches are compositionally biased toward polar residues: residues 71 to 80 and 133 to 142; these read SNPNPMSQSD and VSSGSTQQDT. The span at 175 to 190 shows a compositional bias: basic and acidic residues; that stretch reads RKDTRNLTEEEKRRQK. The N-linked (GlcNAc...) asparagine glycan is linked to Asn180. The next 2 membrane-spanning stretches (helical) occupy residues 200-220 and 235-255; these read IWNI…LQCF and VGLI…TFGF. N-linked (GlcNAc...) asparagine glycosylation is found at Asn365, Asn404, and Asn426. Residues 487–507 form a helical membrane-spanning segment; that stretch reads VVLYVSLVFILAIVAAKFFLA. Disordered stretches follow at residues 548-570 and 582-606; these read PKIT…RGSM and YAVD…AKLL. Over residues 553–562 the composition is skewed to polar residues; that stretch reads PASTVTGSDG. Asn617, Asn903, and Asn1030 each carry an N-linked (GlcNAc...) asparagine glycan. A run of 3 helical transmembrane segments spans residues 1062–1082, 1087–1107, and 1115–1135; these read IGTL…ILSI, VPVI…ILIV, and YILW…VLPA.

The protein belongs to the chitin synthase family. Class IV subfamily. Post-translationally, maximal activity requires trypsin activation, suggesting a zymogenic nature.

The protein resides in the cell membrane. The catalysed reaction is [(1-&gt;4)-N-acetyl-beta-D-glucosaminyl](n) + UDP-N-acetyl-alpha-D-glucosamine = [(1-&gt;4)-N-acetyl-beta-D-glucosaminyl](n+1) + UDP + H(+). Its activity is regulated as follows. Activity is stimulated by Mg(2+), and is more inhibited by polyoxin D than by nikkomycin. Functionally, polymerizes chitin, a structural polymer of the cell wall and septum, by transferring the sugar moiety of UDP-GlcNAc to the non-reducing end of the growing chitin polymer. CHS4 synthesizes a large amount of chitin and appears to play a role in the process of cell separation. CHS4 is particularly well suited for functioning at the higher temperatures associated with its poorly characterized saprophic environment and with human infection. The sequence is that of Chitin synthase 4 from Exophiala dermatitidis (Black yeast-like fungus).